The chain runs to 308 residues: D-alanine--D-alanine ligase (308 aa).

An ATP-grasp domain is found at 108–303 (KLVWKAAGLP…YEALCLKVLE (196 aa)). 134 to 189 (EAELGLPMFVKPACEGSSLGVTKVRKAGELAQAYAEARKFDPLVLAEQFVGGGEYT) contacts ATP. 3 residues coordinate Mg(2+): D257, E270, and N272.

This sequence belongs to the D-alanine--D-alanine ligase family. Mg(2+) serves as cofactor. Requires Mn(2+) as cofactor.

It is found in the cytoplasm. The catalysed reaction is 2 D-alanine + ATP = D-alanyl-D-alanine + ADP + phosphate + H(+). The protein operates within cell wall biogenesis; peptidoglycan biosynthesis. In terms of biological role, cell wall formation. The polypeptide is D-alanine--D-alanine ligase (Laribacter hongkongensis (strain HLHK9)).